Reading from the N-terminus, the 130-residue chain is Small ribosomal subunit protein uS9 (130 aa).

It belongs to the universal ribosomal protein uS9 family.

In Stutzerimonas stutzeri (strain A1501) (Pseudomonas stutzeri), this protein is Small ribosomal subunit protein uS9.